A 118-amino-acid chain; its full sequence is Small integral membrane protein 17 (118 aa).

Residues 1 to 84 (MQSLRPEQTR…DDESEGSQGF (84 aa)) are disordered. A compositionally biased stretch (basic and acidic residues) spans 13–42 (LEPERTKTLLPRESRAWEKPPHPACTKDWE). A helical transmembrane segment spans residues 96-116 (IVLVVCVLFLFLVLTGMPMMF).

It localises to the membrane. The sequence is that of Small integral membrane protein 17 (SMIM17) from Homo sapiens (Human).